Consider the following 256-residue polypeptide: N-acetylglucosaminyldiphosphoundecaprenol N-acetyl-beta-D-mannosaminyltransferase (256 aa).

Belongs to the glycosyltransferase 26 family. TagA/TarA subfamily.

It carries out the reaction UDP-N-acetyl-alpha-D-mannosamine + N-acetyl-alpha-D-glucosaminyl-di-trans,octa-cis-undecaprenyl diphosphate = N-acetyl-beta-D-mannosaminyl-(1-&gt;4)-N-acetyl-alpha-D-glucosaminyl di-trans,octa-cis-undecaprenyl diphosphate + UDP + H(+). It functions in the pathway cell wall biogenesis; poly(glycerol phosphate) teichoic acid biosynthesis. Catalyzes the conversion of GlcNAc-PP-undecaprenol into ManNAc-GlcNAc-PP-undecaprenol, the first committed lipid intermediate in the de novo synthesis of teichoic acid. The chain is N-acetylglucosaminyldiphosphoundecaprenol N-acetyl-beta-D-mannosaminyltransferase from Bacillus subtilis (strain 168).